The chain runs to 220 residues: Ribosomal RNA large subunit methyltransferase E (220 aa).

5 residues coordinate S-adenosyl-L-methionine: Gly-60, Trp-62, Asp-92, Asp-108, and Asp-133. The active-site Proton acceptor is Lys-173.

The protein belongs to the class I-like SAM-binding methyltransferase superfamily. RNA methyltransferase RlmE family.

Its subcellular location is the cytoplasm. It catalyses the reaction uridine(2552) in 23S rRNA + S-adenosyl-L-methionine = 2'-O-methyluridine(2552) in 23S rRNA + S-adenosyl-L-homocysteine + H(+). Its function is as follows. Specifically methylates the uridine in position 2552 of 23S rRNA at the 2'-O position of the ribose in the fully assembled 50S ribosomal subunit. This chain is Ribosomal RNA large subunit methyltransferase E, found in Paraburkholderia phytofirmans (strain DSM 17436 / LMG 22146 / PsJN) (Burkholderia phytofirmans).